A 264-amino-acid chain; its full sequence is Protein GrpE (264 aa).

Residues 36 to 49 show a composition bias toward basic and acidic residues; that stretch reads KVQSKKVSSDHSSS. Residues 36–59 form a disordered region; the sequence is KVQSKKVSSDHSSSEDNASSDINS. Over residues 50–59 the composition is skewed to low complexity; sequence EDNASSDINS.

It belongs to the GrpE family. Homodimer.

The protein localises to the cytoplasm. In terms of biological role, participates actively in the response to hyperosmotic and heat shock by preventing the aggregation of stress-denatured proteins, in association with DnaK and GrpE. It is the nucleotide exchange factor for DnaK and may function as a thermosensor. Unfolded proteins bind initially to DnaJ; upon interaction with the DnaJ-bound protein, DnaK hydrolyzes its bound ATP, resulting in the formation of a stable complex. GrpE releases ADP from DnaK; ATP binding to DnaK triggers the release of the substrate protein, thus completing the reaction cycle. Several rounds of ATP-dependent interactions between DnaJ, DnaK and GrpE are required for fully efficient folding. This is Protein GrpE from Peanut witches'-broom phytoplasma.